Reading from the N-terminus, the 537-residue chain is Multidrug resistance protein Stp (537 aa).

A run of 14 helical transmembrane segments spans residues 6-26 (LLTL…ALIV), 46-66 (WVVA…ATLA), 77-97 (IGVS…SIAV), 104-124 (AQGL…SAAF), 136-156 (IWTA…GLLV), 163-183 (SIFY…LCYV), 200-220 (LLFI…PQIG), 223-243 (SVQT…FVWL), 262-282 (YALA…MLLL), 300-320 (LMIL…GHLV), 327-347 (VPIL…IFSE), 352-372 (ALVL…LTPI), 397-417 (AIGS…WLSA), and 478-498 (VALL…WRWF).

The protein belongs to the major facilitator superfamily. EmrB family.

The protein resides in the cell membrane. Contributes to spectinomycin and tetracycline resistance. In Mycobacterium tuberculosis (strain ATCC 25618 / H37Rv), this protein is Multidrug resistance protein Stp (stp).